The sequence spans 121 residues: uncharacterized protein (121 aa).

2 disordered regions span residues 1–28 and 60–81; these read MGCASAKHVATVQNEEEAQRGKSYQNGD and QENLEKSASSNTRLKTNKEIPG. A phosphoserine mark is found at Ser95 and Ser115.

This is an uncharacterized protein from Mus musculus (Mouse).